Here is an 81-residue protein sequence, read N- to C-terminus: Photosystem I iron-sulfur center (81 aa).

4Fe-4S ferredoxin-type domains lie at 2 to 31 (SHSVRVYDTCIGCTQCVRACPCDVLEMVPW) and 39 to 68 (IASAPRAEDCIGCKRCETACPTDFLSVRVY). Positions 11, 14, 17, 21, 48, 51, 54, and 58 each coordinate [4Fe-4S] cluster.

As to quaternary structure, the eukaryotic PSI reaction center is composed of at least 11 subunits. [4Fe-4S] cluster serves as cofactor.

The protein localises to the plastid. The protein resides in the chloroplast thylakoid membrane. The catalysed reaction is reduced [plastocyanin] + hnu + oxidized [2Fe-2S]-[ferredoxin] = oxidized [plastocyanin] + reduced [2Fe-2S]-[ferredoxin]. In terms of biological role, apoprotein for the two 4Fe-4S centers FA and FB of photosystem I (PSI); essential for photochemical activity. FB is the terminal electron acceptor of PSI, donating electrons to ferredoxin. The C-terminus interacts with PsaA/B/D and helps assemble the protein into the PSI complex. Required for binding of PsaD and PsaE to PSI. PSI is a plastocyanin/cytochrome c6-ferredoxin oxidoreductase, converting photonic excitation into a charge separation, which transfers an electron from the donor P700 chlorophyll pair to the spectroscopically characterized acceptors A0, A1, FX, FA and FB in turn. This is Photosystem I iron-sulfur center from Emiliania huxleyi (Coccolithophore).